The following is a 379-amino-acid chain: 1-deoxy-D-xylulose 5-phosphate reductoisomerase (379 aa).

NADPH-binding residues include Thr-10, Gly-11, Ser-12, Ile-13, Arg-38, Asn-39, and Asn-121. Position 122 (Lys-122) interacts with 1-deoxy-D-xylulose 5-phosphate. Glu-123 is a binding site for NADPH. Asp-147 serves as a coordination point for Mn(2+). 1-deoxy-D-xylulose 5-phosphate-binding residues include Ser-148, Glu-149, Ser-173, and His-196. Position 149 (Glu-149) interacts with Mn(2+). Gly-202 is a binding site for NADPH. 1-deoxy-D-xylulose 5-phosphate-binding residues include Ser-209, Asn-214, Lys-215, and Glu-218. Residue Glu-218 coordinates Mn(2+).

The protein belongs to the DXR family. Mg(2+) serves as cofactor. Mn(2+) is required as a cofactor.

The enzyme catalyses 2-C-methyl-D-erythritol 4-phosphate + NADP(+) = 1-deoxy-D-xylulose 5-phosphate + NADPH + H(+). It participates in isoprenoid biosynthesis; isopentenyl diphosphate biosynthesis via DXP pathway; isopentenyl diphosphate from 1-deoxy-D-xylulose 5-phosphate: step 1/6. Its function is as follows. Catalyzes the NADPH-dependent rearrangement and reduction of 1-deoxy-D-xylulose-5-phosphate (DXP) to 2-C-methyl-D-erythritol 4-phosphate (MEP). In Chlamydia muridarum (strain MoPn / Nigg), this protein is 1-deoxy-D-xylulose 5-phosphate reductoisomerase.